The following is a 316-amino-acid chain: Ribosomal RNA small subunit methyltransferase H (316 aa).

S-adenosyl-L-methionine-binding positions include 35-37 (GGH), aspartate 55, phenylalanine 79, aspartate 101, and glutamine 108.

Belongs to the methyltransferase superfamily. RsmH family.

Its subcellular location is the cytoplasm. The catalysed reaction is cytidine(1402) in 16S rRNA + S-adenosyl-L-methionine = N(4)-methylcytidine(1402) in 16S rRNA + S-adenosyl-L-homocysteine + H(+). Specifically methylates the N4 position of cytidine in position 1402 (C1402) of 16S rRNA. In Aliivibrio fischeri (strain ATCC 700601 / ES114) (Vibrio fischeri), this protein is Ribosomal RNA small subunit methyltransferase H.